The chain runs to 189 residues: Ribosome maturation factor RimP (189 aa).

This sequence belongs to the RimP family.

It localises to the cytoplasm. Its function is as follows. Required for maturation of 30S ribosomal subunits. The polypeptide is Ribosome maturation factor RimP (Corynebacterium kroppenstedtii (strain DSM 44385 / JCM 11950 / CIP 105744 / CCUG 35717)).